Here is a 36-residue protein sequence, read N- to C-terminus: Turgencin-A (36 aa).

3 cysteine pairs are disulfide-bonded: Cys8–Cys33, Cys12–Cys29, and Cys17–Cys26. Met10 bears the Methionine sulfoxide mark. Position 36 is a valine amide (Val36).

Its subcellular location is the secreted. Its function is as follows. Has antimicrobial activity against Gram-positive bacteria (C.glutamicum ATCC 13032 (MIC=0.4 uM), B.subtilis ATCC 23857 (MIC=0.4 uM) and S.aureus ATCC 9144 (MIC=6.3 uM)) and Gram-negative bacteria (E.coli ATCC 25922 (MIC=0.8 uM) and P.aeruginosa ATCC 27853 (MIC=1.6 uM)). In Synoicum turgens (Colonial ascidian), this protein is Turgencin-A.